The sequence spans 194 residues: Ribonuclease HII (194 aa).

Residues 16-194 (CIVAGIDEAG…PYHRRSFRCC (179 aa)) form the RNase H type-2 domain. A divalent metal cation-binding residues include D22, E23, and D113.

It belongs to the RNase HII family. The cofactor is Mn(2+). Mg(2+) is required as a cofactor.

The protein resides in the cytoplasm. The enzyme catalyses Endonucleolytic cleavage to 5'-phosphomonoester.. In terms of biological role, endonuclease that specifically degrades the RNA of RNA-DNA hybrids. The sequence is that of Ribonuclease HII from Rickettsia massiliae (strain Mtu5).